Reading from the N-terminus, the 121-residue chain is Fluoride-specific ion channel FluC (121 aa).

The next 4 membrane-spanning stretches (helical) occupy residues 5–25, 33–53, 66–83, and 98–118; these read LLIFLGGGTGSVLRYLLTISI, FPWGTFAVNILGCILIGVFYT, LMLTIGLCGGFTTFSTFS, and FFTYIIGSVVLGILGVMLGIW. Gly-74 and Thr-77 together coordinate Na(+).

This sequence belongs to the fluoride channel Fluc/FEX (TC 1.A.43) family.

It is found in the cell inner membrane. It catalyses the reaction fluoride(in) = fluoride(out). With respect to regulation, na(+) is not transported, but it plays an essential structural role and its presence is essential for fluoride channel function. In terms of biological role, fluoride-specific ion channel. Important for reducing fluoride concentration in the cell, thus reducing its toxicity. The protein is Fluoride-specific ion channel FluC of Phocaeicola vulgatus (strain ATCC 8482 / DSM 1447 / JCM 5826 / CCUG 4940 / NBRC 14291 / NCTC 11154) (Bacteroides vulgatus).